A 559-amino-acid chain; its full sequence is Germacrene A synthase 1 (559 aa).

Mg(2+) contacts are provided by Asp-312, Asp-316, Asp-456, Thr-460, and Glu-464. A DDXXD motif motif is present at residues 312–316 (DDTYD).

It belongs to the terpene synthase family. Monomer. Mg(2+) serves as cofactor. In terms of tissue distribution, mainly expressed in sunflower trichomes.

The enzyme catalyses (2E,6E)-farnesyl diphosphate = (+)-(R)-germacrene A + diphosphate. The protein operates within secondary metabolite biosynthesis; terpenoid biosynthesis. In terms of biological role, sesquiterpene synthase involved in germacrene A biosynthesis. Germacrene A is a precursor of several sesquiterpene lactones. This is Germacrene A synthase 1 from Helianthus annuus (Common sunflower).